Reading from the N-terminus, the 919-residue chain is Glutamate receptor ionotropic, kainate 3 (919 aa).

The N-terminal stretch at Met-1 to Gly-31 is a signal peptide. The Extracellular segment spans residues Met-32–Pro-563. Asn-70, Asn-76, Asn-278, Asn-381, Asn-415, Asn-426, and Asn-433 each carry an N-linked (GlcNAc...) asparagine glycan. A disulfide bond links Cys-99 and Cys-350. 3 residues coordinate L-glutamate: Pro-518, Thr-520, and Arg-525. N-linked (GlcNAc...) asparagine glycosylation is found at Asn-548 and Asn-551. The helical transmembrane segment at Asp-564–Ala-584 threads the bilayer. Residues Arg-585 to Arg-636 lie on the Cytoplasmic side of the membrane. The chain crosses the membrane as a helical span at residues Ile-637 to Leu-657. Residues Ala-658–Lys-820 lie on the Extracellular side of the membrane. Residues Ala-691, Thr-692, and Glu-739 each coordinate L-glutamate. Residue Asn-752 is glycosylated (N-linked (GlcNAc...) asparagine). The chain crosses the membrane as a helical span at residues Ile-821–Gly-841. Residues Glu-842–Pro-919 lie on the Cytoplasmic side of the membrane. Phosphoserine is present on Ser-869. Residue Lys-887 forms a Glycyl lysine isopeptide (Lys-Gly) (interchain with G-Cter in SUMO1) linkage.

The protein belongs to the glutamate-gated ion channel (TC 1.A.10.1) family. GRIK3 subfamily. As to quaternary structure, homotetramer, and heterotetramer with either GRIK4 or GRIK5. Can form functional heteromeric receptors with GRIK2. Interacts with PRKCABP. Interacts with NETO2.

It is found in the cell membrane. It localises to the postsynaptic cell membrane. It carries out the reaction Ca(2+)(in) = Ca(2+)(out). Ionotropic glutamate receptor that functions as a cation-permeable ligand-gated ion channel, gated by L-glutamate and the glutamatergic agonist kainic acid. Binding of the excitatory neurotransmitter L-glutamate induces a conformation change, leading to the opening of the cation channel, and thereby converts the chemical signal to an electrical impulse. The receptor then desensitizes rapidly and enters a transient inactive state, characterized by the presence of bound agonist. In association with GRIK2, involved in presynaptic facilitation of glutamate release at hippocampal mossy fiber synapses. This chain is Glutamate receptor ionotropic, kainate 3 (GRIK3), found in Macaca fascicularis (Crab-eating macaque).